Here is a 365-residue protein sequence, read N- to C-terminus: PHD finger protein 6 (365 aa).

Residue Ser2 is modified to N-acetylserine. 2 short sequence motifs (nuclear localization signal) span residues 13–16 (RQRK) and 129–133 (RKHKK). The segment at 14–52 (QRKCGFCKSNRDKECGQLLISENQKVAAHHKCMLFSSAL) adopts a C2HC pre-PHD-type 1 zinc-finger fold. An extended PHD1 domain (ePHD1) region spans residues 14 to 132 (QRKCGFCKSN…IYMVYCRKHK (119 aa)). Residues 80–132 (LMCSLCHCPGATIGCDVKTCHRTYHYHCALHDKAQIREKPSQGIYMVYCRKHK) form a PHD-type 1 zinc finger. Ser138, Ser145, and Ser155 each carry phosphoserine. The disordered stretch occupies residues 139-211 (EADLEESFNE…RSSPSDTRPK (73 aa)). A Nucleolar localization signal motif is present at residues 157 to 169 (KSKKKSRKGRPRK). Residues 157–171 (KSKKKSRKGRPRKTN) show a composition bias toward basic residues. A Glycyl lysine isopeptide (Lys-Gly) (interchain with G-Cter in SUMO2) cross-link involves residue Lys173. A phosphoserine mark is found at Ser183 and Ser199. The segment at 209–249 (RPKCGFCHVGEEENEARGKLHIFNAKKAAAHYKCMLFSSGT) adopts a C2HC pre-PHD-type 2 zinc-finger fold. An extended PHD2 domain (ePHD2) region spans residues 209–330 (RPKCGFCHVG…IYKLYCKNHS (122 aa)). A Glycyl lysine isopeptide (Lys-Gly) (interchain with G-Cter in SUMO2) cross-link involves residue Lys227. The segment at 278 to 330 (MKCTLCSQPGATIGCEIKACVKTYHYHCGVQDKAKYIENMSRGIYKLYCKNHS) adopts a PHD-type 2 zinc-finger fold. The segment at 330 to 365 (SGNDERDEEDEERESKSRGKVEIDQQQLTQQQLNGN) is disordered. A compositionally biased stretch (basic and acidic residues) spans 342-352 (RESKSRGKVEI). Over residues 354-365 (QQQLTQQQLNGN) the composition is skewed to low complexity. The residue at position 358 (Thr358) is a Phosphothreonine.

As to quaternary structure, interacts with UBTF. Interacts with the NuRD complex component RBBP4 (via the nucleolar localization motif), the interaction mediates transcriptional repression activity.

It localises to the nucleus. Its subcellular location is the nucleolus. The protein resides in the chromosome. It is found in the centromere. The protein localises to the kinetochore. In terms of biological role, transcriptional regulator that associates with ribosomal RNA promoters and suppresses ribosomal RNA (rRNA) transcription. The chain is PHD finger protein 6 (PHF6) from Pongo abelii (Sumatran orangutan).